Reading from the N-terminus, the 456-residue chain is Adenylosuccinate synthetase isozyme 1 (456 aa).

The disordered stretch occupies residues 1 to 30; the sequence is MSSGWSQNDHRSYSNPPPVSGKRPRNDSGN. Residues 41–47 and 69–71 each bind GTP; these read GDEGKGK and GHT. D42 functions as the Proton acceptor in the catalytic mechanism. Residues D42 and G69 each coordinate Mg(2+). A substrate-binding site is contributed by D42. Residues 42 to 45 and 67 to 70 each bind IMP; these read DEGK and NAGH. The Proton donor role is filled by H70. S130 carries the post-translational modification Phosphoserine. The IMP site is built by T162, R176, N255, T270, and R334. 330–336 serves as a coordination point for substrate; sequence VTTGRKR. GTP is bound by residues R336, 362–364, and 444–447; these read KLD and GVGK.

This sequence belongs to the adenylosuccinate synthetase family. As to quaternary structure, homodimer. The cofactor is Mg(2+).

It localises to the cytoplasm. It carries out the reaction IMP + L-aspartate + GTP = N(6)-(1,2-dicarboxyethyl)-AMP + GDP + phosphate + 2 H(+). It functions in the pathway purine metabolism; AMP biosynthesis via de novo pathway; AMP from IMP: step 1/2. In terms of biological role, component of the purine nucleotide cycle (PNC), which interconverts IMP and AMP to regulate the nucleotide levels in various tissues, and which contributes to glycolysis and ammoniagenesis. Catalyzes the first committed step in the biosynthesis of AMP from IMP. The polypeptide is Adenylosuccinate synthetase isozyme 1 (adss1) (Danio rerio (Zebrafish)).